Here is a 99-residue protein sequence, read N- to C-terminus: DNA-binding protein HU (99 aa).

The protein belongs to the bacterial histone-like protein family. In terms of assembly, homodimer.

Its function is as follows. Histone-like DNA-binding protein which is capable of wrapping DNA to stabilize it, and thus to prevent its denaturation under extreme environmental conditions. In Rickettsia typhi (strain ATCC VR-144 / Wilmington), this protein is DNA-binding protein HU (hup).